The primary structure comprises 150 residues: Cyclin-dependent kinases regulatory subunit (150 aa).

Residues 115-137 (AAAQQQQQQQQQQQQQQQQHQTQ) are compositionally biased toward low complexity. A disordered region spans residues 115–150 (AAAQQQQQQQQQQQQQQQQHQTQSISNDMQVPPQIS).

The protein belongs to the CKS family. In terms of assembly, forms a stable but non-covalent complex with the CDC28 protein and with a cyclin.

In terms of biological role, binds to the catalytic subunit of the cyclin dependent kinase (CDC28) and is essential for its biological function. In Saccharomyces cerevisiae (strain ATCC 204508 / S288c) (Baker's yeast), this protein is Cyclin-dependent kinases regulatory subunit.